Here is a 346-residue protein sequence, read N- to C-terminus: Selenide, water dikinase (346 aa).

Sec17 is a catalytic residue. Residue Sec17 is a non-standard amino acid, selenocysteine. Residues Lys20 and Thr47–Asp49 each bind ATP. Residue Asp50 participates in Mg(2+) binding. ATP-binding positions include Asp67, Asp90, and Gly138–Thr140. Asp90 lines the Mg(2+) pocket. Asp226 serves as a coordination point for Mg(2+).

The protein belongs to the selenophosphate synthase 1 family. Class I subfamily. As to quaternary structure, homodimer. It depends on Mg(2+) as a cofactor.

It carries out the reaction hydrogenselenide + ATP + H2O = selenophosphate + AMP + phosphate + 2 H(+). Its function is as follows. Synthesizes selenophosphate from selenide and ATP. In Trichlorobacter lovleyi (strain ATCC BAA-1151 / DSM 17278 / SZ) (Geobacter lovleyi), this protein is Selenide, water dikinase.